We begin with the raw amino-acid sequence, 290 residues long: 4-hydroxy-tetrahydrodipicolinate synthase (290 aa).

Threonine 44 contacts pyruvate. Tyrosine 132 serves as the catalytic Proton donor/acceptor. Lysine 160 (schiff-base intermediate with substrate) is an active-site residue. A pyruvate-binding site is contributed by isoleucine 202.

This sequence belongs to the DapA family. Homotetramer; dimer of dimers.

The protein resides in the cytoplasm. It catalyses the reaction L-aspartate 4-semialdehyde + pyruvate = (2S,4S)-4-hydroxy-2,3,4,5-tetrahydrodipicolinate + H2O + H(+). It participates in amino-acid biosynthesis; L-lysine biosynthesis via DAP pathway; (S)-tetrahydrodipicolinate from L-aspartate: step 3/4. Its function is as follows. Catalyzes the condensation of (S)-aspartate-beta-semialdehyde [(S)-ASA] and pyruvate to 4-hydroxy-tetrahydrodipicolinate (HTPA). The sequence is that of 4-hydroxy-tetrahydrodipicolinate synthase from Alkaliphilus oremlandii (strain OhILAs) (Clostridium oremlandii (strain OhILAs)).